Consider the following 729-residue polypeptide: Polyribonucleotide nucleotidyltransferase (729 aa).

Positions 510 and 516 each coordinate Mg(2+). Residues 576-635 (PRVISVKIPVDKIGEVIGPKGKMINQIQADSGAEITVEDDGTIYIGAADGTSAETARSAI) form the KH domain. Positions 647-719 (GERYLGTIVK…ARGKISLSPS (73 aa)) constitute an S1 motif domain.

Belongs to the polyribonucleotide nucleotidyltransferase family. It depends on Mg(2+) as a cofactor.

It is found in the cytoplasm. The enzyme catalyses RNA(n+1) + phosphate = RNA(n) + a ribonucleoside 5'-diphosphate. Involved in mRNA degradation. Catalyzes the phosphorolysis of single-stranded polyribonucleotides processively in the 3'- to 5'-direction. This Frankia alni (strain DSM 45986 / CECT 9034 / ACN14a) protein is Polyribonucleotide nucleotidyltransferase.